We begin with the raw amino-acid sequence, 163 residues long: Superoxide dismutase [Mn] (163 aa).

The Mn(2+) site is built by His-2, His-50, Asp-134, and His-138.

It belongs to the iron/manganese superoxide dismutase family. Requires Mn(2+) as cofactor.

It carries out the reaction 2 superoxide + 2 H(+) = H2O2 + O2. Destroys superoxide anion radicals which are normally produced within the cells and which are toxic to biological systems. This is Superoxide dismutase [Mn] (sodA) from Mycobacterium scrofulaceum.